A 285-amino-acid polypeptide reads, in one-letter code: Nucleotide-binding protein Pmen_0867 (285 aa).

An ATP-binding site is contributed by 8 to 15 (GRSGSGKS). 60–63 (DARN) contacts GTP.

The protein belongs to the RapZ-like family.

Its function is as follows. Displays ATPase and GTPase activities. The chain is Nucleotide-binding protein Pmen_0867 from Ectopseudomonas mendocina (strain ymp) (Pseudomonas mendocina).